We begin with the raw amino-acid sequence, 841 residues long: GRIP1-associated protein 1 (841 aa).

Ala-2 is subject to N-acetylalanine. Coiled-coil stretches lie at residues 4-161 (ALSE…YGKE) and 208-641 (EQLQ…NSKS). Disordered regions lie at residues 532–551 (AEES…KQCR) and 558–580 (LKGK…EERD). Residues Ser-655, Ser-666, Ser-668, Ser-669, Ser-688, Ser-690, Ser-691, and Ser-692 each carry the phosphoserine modification. Residues 681-706 (SSAVPARSLSSSPQAQPPRPAELSDE) are disordered. Over residues 682–694 (SAVPARSLSSSPQ) the composition is skewed to low complexity. Coiled coils occupy residues 701–735 (AELS…LEVS) and 785–814 (DENL…KDME).

In terms of assembly, interacts with GRIP1, GRIP2 and AMPA receptors. Interacts (via C-terminus) with MAPK8/JNK1 and MAP3K1/MEKK1; the interaction promotes MAP3K1-mediated phosphorylation of MAPK8. Interacts (via N-terminus) with RAB4A (in GTP-bound form). Interacts (via C-terminus) with STX12. Proteolytically cleaved by caspase-3. A minor C-terminal proteolytic fragment of 30 kDa is produced. Proteolytic cleavage is required for JNK signaling activation.

It is found in the early endosome membrane. The protein resides in the recycling endosome membrane. It localises to the cell projection. The protein localises to the axon. Its subcellular location is the dendrite. It is found in the synapse. Functionally, regulates the endosomal recycling back to the neuronal plasma membrane, possibly by connecting early and late recycling endosomal domains and promoting segregation of recycling endosomes from early endosomal membranes. Involved in the localization of recycling endosomes to dendritic spines, thereby playing a role in the maintenance of dendritic spine morphology. Required for the activity-induced AMPA receptor recycling to dendrite membranes and for long-term potentiation and synaptic plasticity. In terms of biological role, functions as a scaffold protein to facilitate MAP3K1/MEKK1-mediated activation of the JNK1 kinase by phosphorylation, possibly by bringing MAP3K1/MEKK1 and JNK1 in close proximity. The sequence is that of GRIP1-associated protein 1 from Homo sapiens (Human).